The primary structure comprises 401 residues: Adenylosuccinate synthetase (401 aa).

Residues 12–18 (GDEGKGK) and 40–42 (GHT) each bind GTP. The active-site Proton acceptor is D13. 2 residues coordinate Mg(2+): D13 and G40. IMP is bound by residues 13 to 16 (DEGK), 38 to 41 (NAGH), T128, R142, Q212, T227, and R290. Residue H41 is the Proton donor of the active site. Residue 286 to 292 (ATTRRPR) coordinates substrate. GTP is bound by residues R292, 318 to 320 (KAD), and 390 to 392 (STG).

It belongs to the adenylosuccinate synthetase family. Homodimer. The cofactor is Mg(2+).

The protein resides in the cytoplasm. The enzyme catalyses IMP + L-aspartate + GTP = N(6)-(1,2-dicarboxyethyl)-AMP + GDP + phosphate + 2 H(+). It functions in the pathway purine metabolism; AMP biosynthesis via de novo pathway; AMP from IMP: step 1/2. Functionally, plays an important role in the de novo pathway of purine nucleotide biosynthesis. Catalyzes the first committed step in the biosynthesis of AMP from IMP. This is Adenylosuccinate synthetase from Pseudothermotoga lettingae (strain ATCC BAA-301 / DSM 14385 / NBRC 107922 / TMO) (Thermotoga lettingae).